The following is an 80-amino-acid chain: 14-3-3-like protein 1 (80 aa).

It belongs to the 14-3-3 family.

The polypeptide is 14-3-3-like protein 1 (Pseudotsuga menziesii (Douglas-fir)).